The sequence spans 320 residues: MRSAQVYRWQIPMDAGVVLRDRRLKTRDGLYVCLREGEREGWGEISPLPGFSQENWEEAQSVLLAWVNNWLAGDCELPQMPSVAFGVSCALAELTDTLPQAANYRAAPLCNGDPDDLILKLADMPGEKVAKVKVGLYEAVRDGMVVNLLLEAIPDLHLRLDANRAWTPLKGQQFAKYVNPDYRHRIAFLEEPCKTRDDSRAFARETGIAIAWDESLREPDFAFVAEEGVRAVVIKPTLTGSLEKVREQVQAAHALGLTAVISSSIESSLGLTQLARIAAWLTPDTIPGLDTLDLMQAQQVRRWPGSPLPLVDADVQEQLL.

Lysine 133 serves as the catalytic Proton donor. Residues aspartate 161, glutamate 190, and aspartate 213 each coordinate Mg(2+). The active-site Proton acceptor is lysine 235.

It belongs to the mandelate racemase/muconate lactonizing enzyme family. MenC type 1 subfamily. A divalent metal cation serves as cofactor.

It carries out the reaction (1R,6R)-6-hydroxy-2-succinyl-cyclohexa-2,4-diene-1-carboxylate = 2-succinylbenzoate + H2O. Its pathway is quinol/quinone metabolism; 1,4-dihydroxy-2-naphthoate biosynthesis; 1,4-dihydroxy-2-naphthoate from chorismate: step 4/7. It participates in quinol/quinone metabolism; menaquinone biosynthesis. In terms of biological role, converts 2-succinyl-6-hydroxy-2,4-cyclohexadiene-1-carboxylate (SHCHC) to 2-succinylbenzoate (OSB). This is o-succinylbenzoate synthase from Shigella flexneri.